The sequence spans 299 residues: KATNB1-like protein 1 (299 aa).

Positions 8–15 (VKKRNFSN) match the Nuclear localization signal motif. Ser56 bears the Phosphoserine mark.

In terms of assembly, interacts with KATNA1 and KATNAL1; these interactions are competed by KATNB1 which has a higher affinity for them.

The protein localises to the nucleus. It localises to the cytoplasm. It is found in the cytoskeleton. The protein resides in the spindle pole. Its function is as follows. Regulates microtubule-severing activity of KATNAL1 in a concentration-dependent manner in vitro. The protein is KATNB1-like protein 1 (Katnbl1) of Mus musculus (Mouse).